The chain runs to 459 residues: MNRLPSSASALACSAHALNLIEKRTLDHEEMKALNQEVREYFKEHVNPGFLEYRKSVTAGGDYGAVEWQAGGLNTLVDTQGQEFIDCLGGFGIFNVGHRNPVVVSAVENQLAKQPLHSQELLDPLRAMLAKTLAALTPGKLKYSFFCNSGTESVEAAIKLAKAYQSPRGKFTFIATSGAFHGKSLGALSATAKSTFRKPFMPLLPGFRHVPFGDINAMRTMLSECKKTGDDVAAVILEPIQGEGGVILPPQGYLPAVRKLCDEFGALLILDEVQTGMGRTGKMFACEHENVQPDILCLAKALGGGVMPIGATVATEEVFSVLFDNPFLHTTTFGGNPLACAAALATINVLLTQNLPAQAAQKGDMLLDGFRLLAQEYPDLVNEVRGKGMLMAIEFVDNEIGYDFASEMFRQRVLVAGTLNNAKTIRVEPPLTLTLEQCEQVLKAARKALAALRVSVEEA.

Residues 150-151 (GT) and Q274 contribute to the pyridoxal 5'-phosphate site. K300 carries the N6-(pyridoxal phosphate)lysine modification. A pyridoxal 5'-phosphate-binding site is contributed by T332.

It belongs to the class-III pyridoxal-phosphate-dependent aminotransferase family. Putrescine aminotransferase subfamily. It depends on pyridoxal 5'-phosphate as a cofactor.

It carries out the reaction an alkane-alpha,omega-diamine + 2-oxoglutarate = an omega-aminoaldehyde + L-glutamate. It catalyses the reaction putrescine + 2-oxoglutarate = 1-pyrroline + L-glutamate + H2O. The catalysed reaction is cadaverine + 2-oxoglutarate = 5-aminopentanal + L-glutamate. It participates in amine and polyamine degradation; putrescine degradation; 4-aminobutanal from putrescine (transaminase route): step 1/1. Its function is as follows. Catalyzes the aminotransferase reaction from putrescine to 2-oxoglutarate, leading to glutamate and 4-aminobutanal, which spontaneously cyclizes to form 1-pyrroline. This is the first step in one of two pathways for putrescine degradation, where putrescine is converted into 4-aminobutanoate (gamma-aminobutyrate or GABA) via 4-aminobutanal. Also functions as a cadaverine transaminase in a a L-lysine degradation pathway to succinate that proceeds via cadaverine, glutarate and L-2-hydroxyglutarate. The chain is Putrescine aminotransferase from Klebsiella pneumoniae (strain 342).